The following is a 3110-amino-acid chain: Huntingtin (3110 aa).

Residues 1 to 58 (MKAFESLKSFQQQQQQQQPPPQPPPPPPPPPQPPQPPPQGQPPPPPPLPGPAEEPLHR) form a disordered region. At Lys-2 the chain carries N6-acetyllysine. A compositionally biased stretch (pro residues) spans 18-52 (QPPPQPPPPPPPPPQPPQPPPQGQPPPPPPLPGPA). Lys-146 and Lys-204 each carry N6-acetyllysine. 2 HEAT repeats span residues 174-211 (PYLV…SFGN) and 216-253 (NEIK…HSRR). At Lys-313 the chain carries N6-acetyllysine. 3 positions are modified to phosphoserine: Ser-387, Ser-389, and Ser-402. At Lys-412 the chain carries N6-acetyllysine. The segment at 462–473 (GHDIITEQPRSQ) is interaction with ZDHHC17. Positions 487–549 (DLTSAATDGD…PDSAVTPSDS (63 aa)) are disordered. A compositionally biased stretch (polar residues) spans 521 to 549 (DGTQASSPISDSSQTTTEGPDSAVTPSDS). Residue Gly-522 is the site of N-myristoyl glycine attachment. Phosphoserine is present on residues Ser-611 and Ser-614. HEAT repeat units lie at residues 773 to 810 (FSLV…SLCS) and 873 to 911 (KLQE…KLFY). The interval 1137–1195 (KAALPSLTNPPSLSPIRRKGKEKEPGEQTSTPMSPKKGGEASTASRQSDTSGPVTASKS) is disordered. The segment covering 1140–1151 (LPSLTNPPSLSP) has biased composition (low complexity). A phosphoserine; by CDK5 mark is found at Ser-1150 and Ser-1170. The segment covering 1178–1195 (STASRQSDTSGPVTASKS) has biased composition (polar residues). Residues 1395 to 1432 (LFEPLVIKALKQYTTTTSVQLQKQVLDLLAQLVQLRVN) form an HEAT 5 repeat. The residue at position 1845 (Ser-1845) is a Phosphoserine. The Nuclear export signal motif lies at 2363–2372 (IVVSLARLPL). The segment at 2601–2628 (EEEWDEEEEEEADAPAPTSPPVSPVNSR) is disordered. The segment covering 2602-2613 (EEWDEEEEEEAD) has biased composition (acidic residues).

This sequence belongs to the huntingtin family. As to quaternary structure, interacts with PFN1. Interacts through its N-terminus with PRPF40A. Interacts with PQBP1. Interacts with SETD2. Interacts with SH3GLB1. Interacts with SYVN. Interacts with TPR; the interaction is inhibited by forms of Huntingtin with expanded polyglutamine stretch. Interacts with ZDHHC13 (via ANK repeats). Interacts with ZDHHC17 (via ANK repeats). Interacts with F8A1/F8A2/F8A3. Found in a complex with F8A1/F8A2/F8A3, HTT and RAB5A; mediates the recruitment of HTT by RAB5A. Phosphorylation at Ser-1150 and Ser-1170 by CDK5 in response to DNA damage in nuclei of neurons protects neurons against polyglutamine expansion as well as DNA damage mediated toxicity. In terms of processing, cleaved by caspases downstream of the polyglutamine stretch. Post-translationally, myristoylated at Gly-522, following proteolytic cleavage at Asp-521. Expressed to a high degree in all the regions of the brain of adults and in meiotic cells of the testis. In addition, very low levels are detected in various non-neuronal tissues (heart, muscle, liver, lung and kidney).

The protein localises to the cytoplasm. It localises to the nucleus. The protein resides in the cytoplasmic vesicle. Its subcellular location is the autophagosome. Functionally, may play a role in microtubule-mediated transport or vesicle function. Its function is as follows. Promotes the formation of autophagic vesicles. The chain is Huntingtin (Htt) from Rattus norvegicus (Rat).